The sequence spans 955 residues: MSVSMKDLDPAFRGAGQKEGLEIWRIENFKPVPIPASSYGKFFMGDSYIILKTTALKNGSLRHDIHYWIGKDTSQDESGTAAILTVELDAALGGRAVQYREIQGNETDKFLSYFRPCIMPQPGGVASGFKHVEVNEQEHETRLYVCTGNRVVHVKEVPFARSSLNHDDIFILDTKSKIFQFNGSNSSIQERAKALEVVQYIKDTFHEGKCEVAAVEDGRLMADAEAGEFWGFFGGFAPLPRRAPVEDNEKYEETVFKLLCFNQGKLEPINYESLLHELLKTNKCYLLDCGVELFVWMGRTTSLQERKSASEAAEKLLSDDNRTKTHVIKVIEGFETVMFKSKFKEWPQTPDLKLSSEDGRGKVAALLKRQGLNVKGLMKAAPAKEEPQAYIDCTGSLQVWRINDKDKILLPSADQSKFYTGDCYIFQYMYPGDDKEECLIGSWFGKKSIEEDRVTAISLASKMVESAKFQAVQTRLYEGKEPIQFFVIFQSFQVFKGGLSSGYKKFIAENGIDDDTYLEDGLALFRIQGSGPENMQAIQVDAAASSLNSSYSYILHDGNTVFTWTGNLTTSLDQEVVERQLDIIKPNSQSRSQKEGSETDQFWSLLGGKSEYPSQKIGRANESDPHLFSCILPKGNLKIKEIYHFTQDDLMTEDVFILDCHSDIFVWVGQQVDVKVRLQALDIGEKFVKLDFLMENLSSDTPIFVIMEGSEPTFFTRFFTWDSAKSLMHGNSYQRKLSIVKGGGSPALDKPKRRTPTYSGRSTVQDKSQRSRSMSFSPERVRVRGRSPAFTALAANFESANSRNLSTPPPVVKKLYPKSATPDSSSAPSKSSATASLTGSFDRPKSVKDGSELEKPKQEEDAKEGINTMTSRVESLTINEDVKENEPEDDEGLPVYPYDRLITTAADPVTEIDVTRRETYLSSAEFKDKFGMTKEAFSKLPKWKQNRMKIALQLF.

Gelsolin-like repeat units lie at residues 29–111 (FKPV…DKFL), 152–218 (VHVK…VEDG), 274–339 (LLHE…TVMF), and 644–712 (HFTQ…GSEP). Disordered stretches follow at residues 741–783 (KGGG…RVRV) and 801–895 (NSRN…GLPV). The span at 756-776 (PTYSGRSTVQDKSQRSRSMSF) shows a compositional bias: polar residues. The span at 817–836 (PKSATPDSSSAPSKSSATAS) shows a compositional bias: low complexity. Residues 842–864 (DRPKSVKDGSELEKPKQEEDAKE) show a composition bias toward basic and acidic residues. Residues 867–878 (NTMTSRVESLTI) are compositionally biased toward polar residues. Residues 890–955 (DEGLPVYPYD…NRMKIALQLF (66 aa)) enclose the HP domain.

Belongs to the villin/gelsolin family.

It localises to the cytoplasm. It is found in the cytoskeleton. In terms of biological role, ca(2+)-regulated actin-binding protein. Binds actin microfilaments (MFs). Involved in actin filament bundling, severing and capping. Caps the barbed end of actin filaments and is able to sever them in a calcium-dependent manner. The polypeptide is Villin-5 (Oryza sativa subsp. japonica (Rice)).